The primary structure comprises 755 residues: E3 ubiquitin-protein ligase TRIM56 (755 aa).

The segment at 21–60 (CKICLEQLRAPKTLPCLHTYCQDCLAQLADGGRVRCPECR) adopts an RING-type zinc-finger fold. B box-type zinc fingers lie at residues 98–149 (KPAC…VVDL) and 164–205 (RQAA…CLPL). The Zn(2+) site is built by Cys-169, His-172, Cys-192, and His-197. A coiled-coil region spans residues 216-314 (LEGLLAGVDN…AAAFARRVLS (99 aa)). The tract at residues 371–484 (EEQQPQKDGG…SPALGPNLDG (114 aa)) is disordered. Residues 392–404 (SQSRREDEPKTER) are compositionally biased toward basic and acidic residues. Thr-418 and Thr-442 each carry phosphothreonine. Basic and acidic residues predominate over residues 419–447 (PKEEKAQTTREEGAQTLEEDRAQTPHEDG). Positions 453 to 469 (RGGRPNKKKKFKGRLKS) are enriched in basic residues. Phosphoserine is present on Ser-475.

This sequence belongs to the TRIM/RBCC family. As to quaternary structure, homooligomer. Interacts with STING1. Interacts with TICAM1. In terms of processing, (Microbial infection) Preferentially ubiquitinated with 'Lys-48' and 'Lys-11'-linked ubiquitin chains by Salmonella effector SopA leading to proteasomal targeting and degradation. Autoubiquitinated. In terms of tissue distribution, widely expressed (at protein level).

The protein localises to the cytoplasm. It catalyses the reaction S-ubiquitinyl-[E2 ubiquitin-conjugating enzyme]-L-cysteine + [acceptor protein]-L-lysine = [E2 ubiquitin-conjugating enzyme]-L-cysteine + N(6)-ubiquitinyl-[acceptor protein]-L-lysine.. It participates in protein modification; protein ubiquitination. Functionally, E3 ubiquitin-protein ligase that plays a key role in innate antiviral immunity by mediating ubiquitination of CGAS and STING1. In response to pathogen- and host-derived double-stranded DNA (dsDNA), targets STING1 to 'Lys-63'-linked ubiquitination, thereby promoting its homodimerization, a step required for the production of type I interferon IFN-beta. Also mediate monoubiquitination of CGAS, thereby promoting CGAS oligomerization and subsequent activation. Promotes also TNFalpha-induced NF-kappa-B signaling by mediating 'Lys-63'-linked ubiquitination TAK1, leading to enhanced interaction between TAK1 and CHUK/IKKalpha. Independently of its E3 ubiquitin ligase activity, positive regulator of TLR3 signaling. Potentiates extracellular double stranded RNA (dsRNA)-induced expression of IFNB1 and interferon-stimulated genes ISG15, IFIT1/ISG56, CXCL10, OASL and CCL5/RANTES. Promotes establishment of an antiviral state by TLR3 ligand and TLR3-mediated chemokine induction following infection by hepatitis C virus. Acts as a restriction factor of Zika virus through direct interaction with the viral RNA via its C-terminal region. This Homo sapiens (Human) protein is E3 ubiquitin-protein ligase TRIM56.